The following is a 372-amino-acid chain: Beta-1,3-N-acetylglucosaminyltransferase radical fringe (372 aa).

At 1–10 (MNSSCLGLRR) the chain is on the cytoplasmic side. Residues 11-27 (TCFLLSVTAAAVLLLLL) traverse the membrane as a helical; Signal-anchor for type II membrane protein segment. At 28-372 (PRGQPPAAPR…TIWCPNKKMS (345 aa)) the chain is on the lumenal side. A compositionally biased stretch (pro residues) spans 30–48 (GQPPAAPRRRPPPAGPSRP). A disordered region spans residues 30–96 (GQPPAAPRRR…RVRMGPPGGS (67 aa)). The segment covering 64 to 78 (DRGGGSGAAGGGRGV) has biased composition (gly residues). Arginine 120 contacts substrate. Asparagine 159 carries N-linked (GlcNAc...) asparagine glycosylation. Cystine bridges form between cysteine 160/cysteine 171 and cysteine 189/cysteine 253. Position 193 (aspartate 193) interacts with substrate. Mn(2+) is bound at residue aspartate 194. Aspartate 283 is an active-site residue. Histidine 307 is a Mn(2+) binding site. A disulfide bond links cysteine 357 and cysteine 366.

This sequence belongs to the glycosyltransferase 31 family. Mn(2+) serves as cofactor.

The protein resides in the golgi apparatus membrane. It catalyses the reaction 3-O-(alpha-L-fucosyl)-L-threonyl-[EGF-like domain protein] + UDP-N-acetyl-alpha-D-glucosamine = 3-O-(N-acetyl-beta-D-glucosaminyl-(1-&gt;3)-alpha-L-fucosyl)-L-threonyl-[EGF-like domain protein] + UDP + H(+). The catalysed reaction is 3-O-(alpha-L-fucosyl)-L-seryl-[EGF-like domain protein] + UDP-N-acetyl-alpha-D-glucosamine = 3-O-(N-acetyl-beta-D-glucosaminyl-(1-&gt;3)-alpha-L-fucosyl)-L-seryl-[EGF-like domain protein] + UDP + H(+). In terms of biological role, glycosyltransferase that initiates the elongation of O-linked fucose residues attached to EGF-like repeats in the extracellular domain of Notch molecules. Plays an important role in limb outgrowth, it directs the formation and positioning of the apical ectodermal ridge (AER), one of the key organizer centers of vertebrate limb development. This Gallus gallus (Chicken) protein is Beta-1,3-N-acetylglucosaminyltransferase radical fringe (RFNG).